A 223-amino-acid polypeptide reads, in one-letter code: DNA mismatch repair protein MutH (223 aa).

The protein belongs to the MutH family.

It is found in the cytoplasm. Functionally, sequence-specific endonuclease that cleaves unmethylated GATC sequences. It is involved in DNA mismatch repair. This is DNA mismatch repair protein MutH from Shewanella sp. (strain MR-7).